The following is a 521-amino-acid chain: CDP-diacylglycerol--glycerol-3-phosphate 3-phosphatidyltransferase (521 aa).

Residue 91–98 participates in ATP binding; the sequence is ASLYLGKS. PLD phosphodiesterase domains lie at 177–203 and 419–457; these read GLGLQHMKIYGFDNEIILSGANLSNDY and NGWSYHAKGIWISSRDNNDSDSWKPFITVIGSSNYTRRA. Catalysis depends on residues histidine 182, lysine 184, and aspartate 189.

Belongs to the CDP-alcohol phosphatidyltransferase class-II family.

It localises to the mitochondrion. It catalyses the reaction a CDP-1,2-diacyl-sn-glycerol + sn-glycerol 3-phosphate = a 1,2-diacyl-sn-glycero-3-phospho-(1'-sn-glycero-3'-phosphate) + CMP + H(+). The protein operates within phospholipid metabolism; phosphatidylglycerol biosynthesis; phosphatidylglycerol from CDP-diacylglycerol: step 1/2. Its function is as follows. Essential for the viability of mitochondrial petite mutant. Catalyzes the committed step to the synthesis of the acidic phospholipids. This Saccharomyces pastorianus (Lager yeast) protein is CDP-diacylglycerol--glycerol-3-phosphate 3-phosphatidyltransferase (PGS1).